A 629-amino-acid chain; its full sequence is Methionine--tRNA ligase (629 aa).

The 'HIGH' region motif lies at 10 to 20 (YYVNSEPHIGS). Residues cysteine 125, cysteine 128, cysteine 146, and cysteine 149 each contribute to the Zn(2+) site. Positions 297 to 301 (KISKS) match the 'KMSKS' region motif. Residue lysine 300 coordinates ATP. The tRNA-binding domain occupies 529 to 629 (DFSKVDLRIA…GEITPGAKVS (101 aa)).

The protein belongs to the class-I aminoacyl-tRNA synthetase family. MetG type 2A subfamily. As to quaternary structure, homodimer. It depends on Zn(2+) as a cofactor.

It is found in the cytoplasm. The enzyme catalyses tRNA(Met) + L-methionine + ATP = L-methionyl-tRNA(Met) + AMP + diphosphate. Its function is as follows. Is required not only for elongation of protein synthesis but also for the initiation of all mRNA translation through initiator tRNA(fMet) aminoacylation. The chain is Methionine--tRNA ligase (metG) from Thermotoga maritima (strain ATCC 43589 / DSM 3109 / JCM 10099 / NBRC 100826 / MSB8).